We begin with the raw amino-acid sequence, 513 residues long: GMP synthase [glutamine-hydrolyzing] (513 aa).

The 191-residue stretch at 8–198 folds into the Glutamine amidotransferase type-1 domain; that stretch reads KIIVLDYGSQ…ALNICGAKGN (191 aa). The active-site Nucleophile is the cysteine 85. Residues histidine 172 and glutamate 174 contribute to the active site. The region spanning 199–388 is the GMPS ATP-PPase domain; the sequence is WSMENFIDMQ…LGMPDEIVWR (190 aa). 226-232 contributes to the ATP binding site; the sequence is SGGVDSS.

In terms of assembly, homodimer.

The catalysed reaction is XMP + L-glutamine + ATP + H2O = GMP + L-glutamate + AMP + diphosphate + 2 H(+). It participates in purine metabolism; GMP biosynthesis; GMP from XMP (L-Gln route): step 1/1. Functionally, catalyzes the synthesis of GMP from XMP. This is GMP synthase [glutamine-hydrolyzing] (guaA) from Lactococcus lactis subsp. lactis (strain IL1403) (Streptococcus lactis).